The primary structure comprises 317 residues: tRNA dimethylallyltransferase (317 aa).

Position 16-23 (16-23 (GPTASGKS)) interacts with ATP. Residue 18–23 (TASGKS) participates in substrate binding. 3 interaction with substrate tRNA regions span residues 41–44 (DSAQ), 165–169 (QRIQR), and 247–252 (RCVGYR).

It belongs to the IPP transferase family. Monomer. Mg(2+) is required as a cofactor.

It catalyses the reaction adenosine(37) in tRNA + dimethylallyl diphosphate = N(6)-dimethylallyladenosine(37) in tRNA + diphosphate. Its function is as follows. Catalyzes the transfer of a dimethylallyl group onto the adenine at position 37 in tRNAs that read codons beginning with uridine, leading to the formation of N6-(dimethylallyl)adenosine (i(6)A). The sequence is that of tRNA dimethylallyltransferase from Nitrosomonas europaea (strain ATCC 19718 / CIP 103999 / KCTC 2705 / NBRC 14298).